An 802-amino-acid polypeptide reads, in one-letter code: Protein SBE22 (802 aa).

Disordered stretches follow at residues 207 to 230 (SSTI…RSNS) and 323 to 345 (SGDP…QRHN).

It belongs to the SBE2 family.

The protein localises to the cytoplasm. Its subcellular location is the golgi apparatus. With SBE2, is involved in cell wall integrity and polarity processes like bud growth. This chain is Protein SBE22 (SBE22), found in Vanderwaltozyma polyspora (strain ATCC 22028 / DSM 70294 / BCRC 21397 / CBS 2163 / NBRC 10782 / NRRL Y-8283 / UCD 57-17) (Kluyveromyces polysporus).